The chain runs to 151 residues: UPF0178 protein Shal_3046 (151 aa).

Belongs to the UPF0178 family.

The protein is UPF0178 protein Shal_3046 of Shewanella halifaxensis (strain HAW-EB4).